The following is a 351-amino-acid chain: Biotin synthase (351 aa).

The region spanning 49–265 (NRVRIHILDN…LSVFRLVNPD (217 aa)) is the Radical SAM core domain. Cys64, Cys68, and Cys71 together coordinate [4Fe-4S] cluster. 4 residues coordinate [2Fe-2S] cluster: Cys108, Cys140, Cys200, and Arg269.

This sequence belongs to the radical SAM superfamily. Biotin synthase family. In terms of assembly, homodimer. The cofactor is [4Fe-4S] cluster. It depends on [2Fe-2S] cluster as a cofactor.

It catalyses the reaction (4R,5S)-dethiobiotin + (sulfur carrier)-SH + 2 reduced [2Fe-2S]-[ferredoxin] + 2 S-adenosyl-L-methionine = (sulfur carrier)-H + biotin + 2 5'-deoxyadenosine + 2 L-methionine + 2 oxidized [2Fe-2S]-[ferredoxin]. It participates in cofactor biosynthesis; biotin biosynthesis; biotin from 7,8-diaminononanoate: step 2/2. Catalyzes the conversion of dethiobiotin (DTB) to biotin by the insertion of a sulfur atom into dethiobiotin via a radical-based mechanism. The sequence is that of Biotin synthase from Leptospira biflexa serovar Patoc (strain Patoc 1 / Ames).